The primary structure comprises 129 residues: Phosphoribosyl-AMP cyclohydrolase (129 aa).

Asp-87 provides a ligand contact to Mg(2+). Cys-88 contacts Zn(2+). Residues Asp-89 and Asp-91 each coordinate Mg(2+). Positions 104 and 111 each coordinate Zn(2+).

It belongs to the PRA-CH family. In terms of assembly, homodimer. Mg(2+) serves as cofactor. Zn(2+) is required as a cofactor.

It is found in the cytoplasm. It catalyses the reaction 1-(5-phospho-beta-D-ribosyl)-5'-AMP + H2O = 1-(5-phospho-beta-D-ribosyl)-5-[(5-phospho-beta-D-ribosylamino)methylideneamino]imidazole-4-carboxamide. Its pathway is amino-acid biosynthesis; L-histidine biosynthesis; L-histidine from 5-phospho-alpha-D-ribose 1-diphosphate: step 3/9. Its function is as follows. Catalyzes the hydrolysis of the adenine ring of phosphoribosyl-AMP. In Ruegeria sp. (strain TM1040) (Silicibacter sp.), this protein is Phosphoribosyl-AMP cyclohydrolase.